The chain runs to 280 residues: Chlorophyll a-b binding protein CP29 (280 aa).

The tract at residues 1–42 is disordered; sequence MVFKFPTPPGTQKKAGTTATKPAPKATTKKVATSTGTRSGGV. Val-2 carries the N-acetylvaline modification. Position 7 is a phosphothreonine; in State 1 and State 2 (Thr-7). Low complexity predominate over residues 10-37; sequence GTQKKAGTTATKPAPKATTKKVATSTGT. Phosphothreonine; in State 2 is present on Thr-17. Thr-33 is modified (phosphothreonine; in State 1 and State 2). Tyr-47 contributes to the chlorophyll b binding site. The chlorophyll a site is built by Phe-73 and Ser-79. Ser-103 carries the phosphoserine; in State 2 modification. Positions 137 and 140 each coordinate chlorophyll a. Helical transmembrane passes span 143-163 and 176-196; these read WAML…VSWV and AGLS…ILVG. 3 residues coordinate chlorophyll b: Ser-183, Glu-199, and Arg-202. The chlorophyll a site is built by Glu-238, His-241, Arg-243, and Gln-255. The chain crosses the membrane as a helical span at residues 244 to 264; that stretch reads LAMVSFFGYGVQALSTGEGAL.

Belongs to the light-harvesting chlorophyll a/b-binding (LHC) protein family. As to quaternary structure, the LHC complex consists of chlorophyll a-b binding proteins. Binds at least 14 chlorophylls (8 Chl-a and 6 Chl-b) and carotenoids such as lutein and neoxanthin. serves as cofactor. Post-translationally, reversible phosphorylation plays a role in the State transition process and determines the affinity of LHCII for PSI and PSII.

It is found in the plastid. It localises to the chloroplast thylakoid membrane. Its function is as follows. The light-harvesting complex (LHC) functions as a light receptor, it captures and delivers excitation energy to photosystems with which it is closely associated. CP29 facilitates the State 1 to State 2 transition, where State I is induced by excess photosystem I (PSI) light and State 2 is induced by excess photosystem II (PSII) light. In Chlamydomonas reinhardtii (Chlamydomonas smithii), this protein is Chlorophyll a-b binding protein CP29.